A 213-amino-acid polypeptide reads, in one-letter code: UPF0301 protein Aave_0907 (213 aa).

A disordered region spans residues 93–120; the sequence is MGPSSGKQAAGEGGAQAEGEGAEESAYA.

Belongs to the UPF0301 (AlgH) family.

This chain is UPF0301 protein Aave_0907, found in Paracidovorax citrulli (strain AAC00-1) (Acidovorax citrulli).